The following is a 157-amino-acid chain: Endoribonuclease YbeY (157 aa).

3 residues coordinate Zn(2+): histidine 116, histidine 120, and histidine 126.

It belongs to the endoribonuclease YbeY family. Zn(2+) serves as cofactor.

Its subcellular location is the cytoplasm. Functionally, single strand-specific metallo-endoribonuclease involved in late-stage 70S ribosome quality control and in maturation of the 3' terminus of the 16S rRNA. The polypeptide is Endoribonuclease YbeY (Pseudarthrobacter chlorophenolicus (strain ATCC 700700 / DSM 12829 / CIP 107037 / JCM 12360 / KCTC 9906 / NCIMB 13794 / A6) (Arthrobacter chlorophenolicus)).